Reading from the N-terminus, the 346-residue chain is D-alanine--D-alanine ligase (346 aa).

In terms of domain architecture, ATP-grasp spans 133 to 327 (KLYAKSVGVK…ALADQISLEK (195 aa)). 159–211 (LSFPCIIKPARLGSSIGISIVKDEKDLEYAKDVGFEFDNDLVVEEFKNNIKEY) contributes to the ATP binding site. Mg(2+) is bound by residues Asp-284, Glu-296, and Asn-298.

The protein belongs to the D-alanine--D-alanine ligase family. Mg(2+) is required as a cofactor. Mn(2+) serves as cofactor.

Its subcellular location is the cytoplasm. It catalyses the reaction 2 D-alanine + ATP = D-alanyl-D-alanine + ADP + phosphate + H(+). The protein operates within cell wall biogenesis; peptidoglycan biosynthesis. In terms of biological role, cell wall formation. This is D-alanine--D-alanine ligase from Campylobacter jejuni subsp. jejuni serotype O:6 (strain 81116 / NCTC 11828).